A 430-amino-acid polypeptide reads, in one-letter code: Asparagine--tRNA ligase (430 aa).

It belongs to the class-II aminoacyl-tRNA synthetase family.

Its subcellular location is the cytoplasm. The catalysed reaction is tRNA(Asn) + L-asparagine + ATP = L-asparaginyl-tRNA(Asn) + AMP + diphosphate + H(+). This chain is Asparagine--tRNA ligase, found in Thermococcus gammatolerans (strain DSM 15229 / JCM 11827 / EJ3).